Here is a 341-residue protein sequence, read N- to C-terminus: N-acetyl-gamma-glutamyl-phosphate reductase (341 aa).

The active site involves cysteine 147.

This sequence belongs to the NAGSA dehydrogenase family. Type 1 subfamily.

It is found in the cytoplasm. It carries out the reaction N-acetyl-L-glutamate 5-semialdehyde + phosphate + NADP(+) = N-acetyl-L-glutamyl 5-phosphate + NADPH + H(+). It functions in the pathway amino-acid biosynthesis; L-arginine biosynthesis; N(2)-acetyl-L-ornithine from L-glutamate: step 3/4. Functionally, catalyzes the NADPH-dependent reduction of N-acetyl-5-glutamyl phosphate to yield N-acetyl-L-glutamate 5-semialdehyde. This chain is N-acetyl-gamma-glutamyl-phosphate reductase, found in Dehalococcoides mccartyi (strain ATCC BAA-2266 / KCTC 15142 / 195) (Dehalococcoides ethenogenes (strain 195)).